A 349-amino-acid polypeptide reads, in one-letter code: Phenylalanine--tRNA ligase alpha subunit (349 aa).

E258 is a binding site for Mg(2+).

This sequence belongs to the class-II aminoacyl-tRNA synthetase family. Phe-tRNA synthetase alpha subunit type 1 subfamily. As to quaternary structure, tetramer of two alpha and two beta subunits. It depends on Mg(2+) as a cofactor.

It localises to the cytoplasm. It carries out the reaction tRNA(Phe) + L-phenylalanine + ATP = L-phenylalanyl-tRNA(Phe) + AMP + diphosphate + H(+). This Rickettsia canadensis (strain McKiel) protein is Phenylalanine--tRNA ligase alpha subunit.